Here is a 224-residue protein sequence, read N- to C-terminus: MGPLIAPSILAADFARLTDEAAVVASADWLHVDVMDGHFVPNLTIGLPVVQSLLAASDIPMDCHLMIDNPDRWAPPYAEAGAYNVTFHAEATDNPVGVAHDIRTAGAKAGIGVKPGTPLNPYLDILPHFDTLLIMSVEPGFGGQAFIPEVLSKVRTVRKMVDAGELTILVEIDGGINADTIEQAAEAGVDCFVAGSAVYGAADPSAAVAALRRRAGAVSPHLRR.

S8 serves as a coordination point for substrate. A divalent metal cation-binding residues include H31, D33, and H64. The active-site Proton acceptor is D33. Residues H64, 140-143 (GFGG), 173-175 (DGG), and 195-196 (GS) each bind substrate. Residue D173 participates in a divalent metal cation binding. D173 functions as the Proton donor in the catalytic mechanism.

This sequence belongs to the ribulose-phosphate 3-epimerase family. The cofactor is a divalent metal cation.

It carries out the reaction D-ribulose 5-phosphate = D-xylulose 5-phosphate. The protein operates within carbohydrate degradation. Functionally, catalyzes the reversible epimerization of D-ribulose 5-phosphate to D-xylulose 5-phosphate. This is Ribulose-phosphate 3-epimerase from Mycobacterium leprae (strain TN).